The chain runs to 395 residues: Major outer membrane porin, serovar F (395 aa).

Residues 1 to 22 (MKKLLKSVLVFAALSSASSLQA) form the signal peptide.

The protein belongs to the chlamydial porin (CP) (TC 1.B.2) family. In terms of assembly, part of a disulfide cross-linked outer membrane complex (COMC) composed of the major outer membrane porin (MOMP), the small cysteine-rich protein (OmcA) and the large cysteine-rich periplasmic protein (OmcB).

Its subcellular location is the cell outer membrane. In elementary bodies (EBs, the infectious stage, which is able to survive outside the host cell) provides the structural integrity of the outer envelope through disulfide cross-links with the small cysteine-rich protein and the large cysteine-rich periplasmic protein. It has been described in publications as the Sarkosyl-insoluble COMC (Chlamydia outer membrane complex), and serves as the functional equivalent of peptidoglycan. Its function is as follows. Permits diffusion of specific solutes through the outer membrane. The polypeptide is Major outer membrane porin, serovar F (ompA) (Chlamydia trachomatis).